The following is a 245-amino-acid chain: tRNA pseudouridine synthase A (245 aa).

Aspartate 52 acts as the Nucleophile in catalysis. Tyrosine 111 serves as a coordination point for substrate.

Belongs to the tRNA pseudouridine synthase TruA family. Homodimer.

The enzyme catalyses uridine(38/39/40) in tRNA = pseudouridine(38/39/40) in tRNA. In terms of biological role, formation of pseudouridine at positions 38, 39 and 40 in the anticodon stem and loop of transfer RNAs. The protein is tRNA pseudouridine synthase A of Rhodopseudomonas palustris (strain BisB5).